The following is a 159-amino-acid chain: Insulin-like peptide 7 (159 aa).

A signal peptide spans 1-31 (MTRMIIQNSGSWTLCGAVLLFVLPLIPTPEA). Disulfide bonds link Cys63–Cys136, Cys75–Cys150, and Cys135–Cys141. Positions 90-121 (TGNDEAWIKKTTTEPDGSTWLHVNYANMFLRS) are cleaved as a propeptide — connecting peptide.

The protein belongs to the insulin family. In terms of assembly, heterodimer of a B chain and an A chain linked by two disulfide bonds. In terms of tissue distribution, broadly expressed at a low level throughout the embryo, except the yolk. Expressed at a moderate level in the embryonic midgut. Larval expression is restricted to ten cells of the ventral nerve cord - in four pairs of centrally located cells in the most posterior abdominal segments and in one pair of dorsally located cells in the A1 or A2 segments.

Its subcellular location is the secreted. Its function is as follows. Possible ligand of InR/insulin-like receptor. In Drosophila melanogaster (Fruit fly), this protein is Insulin-like peptide 7.